The primary structure comprises 354 residues: Opsin-5 (354 aa).

Residues methionine 1–aspartate 33 are Extracellular-facing. N-linked (GlcNAc...) asparagine glycosylation is present at asparagine 4. Residues leucine 34–valine 54 form a helical membrane-spanning segment. Residues leucine 55 to asparagine 74 lie on the Cytoplasmic side of the membrane. Residues leucine 75–phenylalanine 95 traverse the membrane as a helical segment. Residues cysteine 96–tryptophan 108 are Extracellular-facing. Cysteines 106 and 183 form a disulfide. Residues tyrosine 109 to leucine 129 form a helical membrane-spanning segment. At aspartate 130–tyrosine 150 the chain is on the cytoplasmic side. The helical transmembrane segment at isoleucine 151–leucine 171 threads the bilayer. At glycine 172–glutamine 197 the chain is on the extracellular side. Residues valine 198 to serine 218 traverse the membrane as a helical segment. Residues tyrosine 219 to lysine 252 are Cytoplasmic-facing. A helical membrane pass occupies residues valine 253–valine 273. Residues tryptophan 274 to serine 288 lie on the Extracellular side of the membrane. A helical transmembrane segment spans residues valine 289–isoleucine 309. Lysine 296 carries the N6-(retinylidene)lysine modification. Residues aspartate 310–tryptophan 353 lie on the Cytoplasmic side of the membrane. 2 S-palmitoyl cysteine lipidation sites follow: cysteine 315 and cysteine 316.

Belongs to the G-protein coupled receptor 1 family. Opsin subfamily. In terms of processing, it is uncertain whether Cys-315 or Cys-316 is palmitoylated. In terms of tissue distribution, detected in brain and retina and cell lines derived from neural retina.

The protein resides in the cell membrane. G-protein coupled receptor which selectively activates G(i) type G proteins via ultraviolet A (UVA) light-mediated activation in the retina. Preferentially binds the chromophore 11-cis retinal and is a bistable protein that displays emission peaks at 380 nm (UVA light) and 470 nm (blue light). Required for the light-response in the inner plexiform layer, and contributes to the regulation of the light-response in the nerve fiber layer, via phosphorylated DAT/SLC6A3 dopamine uptake. Involved in local corneal and retinal circadian rhythm photoentrainment via modulation of the UVA light-induced phase-shift of the retina clock. Acts as a circadian photoreceptor in the outer ear, via modulation of circadian clock-gene expression in response to violet light during the light-to-dark transition phase and night phase of the circadian cycle. Required in the retina to negatively regulate hyaloid vessel regression during postnatal development via light-dependent OPN5-SLC32A1-DRD2-VEGFR2 signaling. Involved in the light-dependent regulation of retina and vitreous compartment dopamine levels. This chain is Opsin-5 (OPN5), found in Homo sapiens (Human).